The following is a 290-amino-acid chain: Cilia- and flagella-associated protein 298 (290 aa).

Belongs to the CFAP298 family. In terms of assembly, interacts with ZMYND10.

Its subcellular location is the cytoplasm. The protein localises to the cytoskeleton. The protein resides in the cilium basal body. Its function is as follows. Plays a role in motile cilium function, possibly by acting on outer dynein arm assembly. Seems to be important for initiation rather than maintenance of cilium motility. Required for correct positioning of cilia at the apical cell surface, suggesting an additional role in the planar cell polarity (PCP) pathway. May suppress canonical Wnt signaling activity. The chain is Cilia- and flagella-associated protein 298 from Mus musculus (Mouse).